Reading from the N-terminus, the 231-residue chain is Potassium/proton antiporter CemA (231 aa).

4 helical membrane-spanning segments follow: residues 7–27, 104–124, 154–174, and 189–209; these read FIPL…SFTF, IHTI…SVYS, ILFL…ELMI, and IISF…KYWI.

The protein belongs to the CemA family.

Its subcellular location is the plastid. The protein resides in the chloroplast inner membrane. The enzyme catalyses K(+)(in) + H(+)(out) = K(+)(out) + H(+)(in). In terms of biological role, contributes to K(+)/H(+) antiport activity by supporting proton efflux to control proton extrusion and homeostasis in chloroplasts in a light-dependent manner to modulate photosynthesis. Prevents excessive induction of non-photochemical quenching (NPQ) under continuous-light conditions. Indirectly promotes efficient inorganic carbon uptake into chloroplasts. This is Potassium/proton antiporter CemA from Pisum sativum (Garden pea).